The sequence spans 116 residues: UPF0329 protein ECU05_1650 (116 aa).

The protein belongs to the UPF0329 family.

The chain is UPF0329 protein ECU05_1650 from Encephalitozoon cuniculi (strain GB-M1) (Microsporidian parasite).